Consider the following 41-residue polypeptide: Alpha-conotoxin CIB (41 aa).

The propeptide occupies 1–21 (SDGRNEAANDEASDVIELALK). Disulfide bonds link Cys-23–Cys-29 and Cys-24–Cys-37. The interval 25–27 (SNP) is ser-Xaa-Pro motif, crucial for potent interaction with nAChR. The residue at position 37 (Cys-37) is a Cysteine amide.

Belongs to the conotoxin A superfamily. Expressed by the venom duct.

The protein localises to the secreted. Its function is as follows. Alpha-conotoxins act on postsynaptic membranes, they bind to the nicotinic acetylcholine receptors (nAChR) and thus inhibit them. This toxin blocks rat neuronal nAChR alpha-3-beta-2/CHRNA3-CHRNB2 (IC(50)=128.9 nM) and alpha-7/CHRNA7 (IC(50)=1511 nM). In vivo, intramuscular injection into zebrafish does not produce any effect on the locomotion of zebrafish. The protein is Alpha-conotoxin CIB of Conus catus (Cat cone).